The primary structure comprises 371 residues: Glycerate kinase (371 aa).

It belongs to the glycerate kinase type-1 family.

The catalysed reaction is (R)-glycerate + ATP = (2R)-3-phosphoglycerate + ADP + H(+). The protein is Glycerate kinase (glxK) of Neisseria meningitidis serogroup B (strain ATCC BAA-335 / MC58).